Here is a 916-residue protein sequence, read N- to C-terminus: Protein translocase subunit SecA (916 aa).

ATP is bound by residues Gln-87, 105–109 (GEGKT), and Asp-512. Residues 857-916 (QHAEAPSMEQAVAGEEEELPEGPAPVVPLEPVRNEQKIGRNEPCPCGSGKKYKHCHGQLD) form a disordered region. Residues Cys-900, Cys-902, Cys-911, and His-912 each contribute to the Zn(2+) site. Residues 906–916 (KKYKHCHGQLD) are compositionally biased toward basic residues.

The protein belongs to the SecA family. As to quaternary structure, monomer and homodimer. Part of the essential Sec protein translocation apparatus which comprises SecA, SecYEG and auxiliary proteins SecDF-YajC and YidC. Zn(2+) is required as a cofactor.

The protein resides in the cell inner membrane. It localises to the cytoplasm. It catalyses the reaction ATP + H2O + cellular proteinSide 1 = ADP + phosphate + cellular proteinSide 2.. Part of the Sec protein translocase complex. Interacts with the SecYEG preprotein conducting channel. Has a central role in coupling the hydrolysis of ATP to the transfer of proteins into and across the cell membrane, serving both as a receptor for the preprotein-SecB complex and as an ATP-driven molecular motor driving the stepwise translocation of polypeptide chains across the membrane. The chain is Protein translocase subunit SecA from Pseudomonas aeruginosa (strain LESB58).